Consider the following 319-residue polypeptide: Probable murein peptide carboxypeptidase (319 aa).

Ser-116 serves as the catalytic Nucleophile. Residues Glu-214 and His-284 each act as charge relay system in the active site.

It belongs to the peptidase S66 family.

Its subcellular location is the cytoplasm. The protein operates within cell wall degradation; peptidoglycan degradation. May be involved in the degradation of peptidoglycan by catalyzing the cleavage of the terminal D-alanine residue from cytoplasmic murein peptides. The sequence is that of Probable murein peptide carboxypeptidase (ykfA) from Bacillus subtilis (strain 168).